The primary structure comprises 679 residues: Stress-70 protein, mitochondrial (679 aa).

Residues 1–46 (MISASRAAVSRFVGTAASRGPTAARHQDGWNGLSHEAFRIVSRRDY) constitute a mitochondrion transit peptide. Positions 1–432 (MISASRAAVS…IQGGVLAGDV (432 aa)) are interaction with NFS1. The ADP site is built by Thr63 and Asn64. Positions 63-431 (TNSCVAVMEG…AIQGGVLAGD (369 aa)) are nucleotide-binding domain (NBD). Lys76 carries the N6-acetyllysine modification. Position 87 is a phosphothreonine (Thr87). An N6-acetyllysine; alternate mark is found at Lys135 and Lys138. 2 positions are modified to N6-succinyllysine; alternate: Lys135 and Lys138. Residue Lys143 is modified to N6-acetyllysine. N6-acetyllysine; alternate is present on Lys206. Lys206 is modified (N6-succinyllysine; alternate). Lys206 carries the post-translational modification N6-malonyllysine; alternate. Residues Lys234 and Lys288 each carry the N6-acetyllysine modification. Lys300 is modified (N6-acetyllysine; alternate). Lys300 carries the N6-succinyllysine; alternate modification. Positions 313, 316, and 320 each coordinate ADP. Residue Lys368 is modified to N6-succinyllysine. The ADP site is built by Gly388 and Arg391. Lys394 carries the N6-succinyllysine modification. Position 408 is a phosphoserine (Ser408). The tract at residues 432 to 441 (VTDVLLLDVT) is interdomain linker. The segment at 432-679 (VTDVLLLDVT…QKDNQKEEKQ (248 aa)) is interaction with FXN and ISCU. Positions 442-679 (PLSLGIETLG…QKDNQKEEKQ (238 aa)) are substrate-binding domain (SBD). The residue at position 513 (Arg513) is an Omega-N-methylarginine. N6-acetyllysine; alternate is present on residues Lys567 and Lys600. Residues Lys567 and Lys600 each carry the N6-succinyllysine; alternate modification. Lys610 bears the N6-succinyllysine mark. Position 612 is an N6-acetyllysine (Lys612). At Lys646 the chain carries N6-acetyllysine; alternate. Lys646 is modified (N6-succinyllysine; alternate). Residues 656 to 679 (ASEREGSGSSGTGEQKDNQKEEKQ) form a disordered region. Positions 669–679 (EQKDNQKEEKQ) are enriched in basic and acidic residues.

This sequence belongs to the heat shock protein 70 family. As to quaternary structure, interacts strongly with the intermediate form of FXN and weakly with its mature form. Interacts with HSCB. Associates with the mitochondrial contact site and cristae organizing system (MICOS) complex, composed of at least MICOS10/MIC10, CHCHD3/MIC19, CHCHD6/MIC25, APOOL/MIC27, IMMT/MIC60, APOO/MIC23/MIC26 and QIL1/MIC13. This complex was also known under the names MINOS or MitOS complex. The MICOS complex associates with mitochondrial outer membrane proteins SAMM50, MTX1, MTX2 and DNAJC11, mitochondrial inner membrane protein TMEM11 and with HSPA9. Interacts with DNLZ, the interaction is required to prevent self-aggregation. Interacts with TESPA1. Interacts with PDPN. Interacts with NFU1, NFS1 and ISCU. Interacts with TP53; the interaction promotes TP53 degradation. Interacts (via SBD domain) with UBXN2A; the interaction with UBXN2A inhibits HSPA9/MOT-2 interaction with and degradation of TP53, thereby promotes TP53 translocation to the nucleus. Interacts with ITPR1 AND VDAC1; this interaction couples ITPR1 to VDAC1. Component of the TIM23 mitochondrial inner membrane pre-sequence translocase complex.

The protein resides in the mitochondrion. The protein localises to the nucleus. Its subcellular location is the nucleolus. It localises to the cytoplasm. It is found in the mitochondrion matrix. It carries out the reaction ATP + H2O = ADP + phosphate + H(+). The chaperone activity is regulated by ATP-induced allosteric coupling of the nucleotide-binding (NBD) and substrate-binding (SBD) domains. ATP binding in the NBD leads to a conformational change in the NBD, which is transferred through the interdomain linker (IDL) to the substrate-binding domain (SBD). This elicits a reduced substrate affinity and a faster substrate exchange rate. Upon hydrolysis of ATP to ADP, the protein undergoes a conformational change that increases its affinity for substrate proteins. It cycles through repeated phases of ATP hydrolysis and nucleotide exchange, facilitating repeated cycles of substrate binding and release. Functions in collaboration with co-chaperones. Functions with the co-chaperone, DNLZ, to maintain solubility and regulate ATP hydrolysis. Nucleotide exchange factors, GRPEL1 and GRPEL2, accelerate nucleotide exchange. Mitochondrial chaperone that plays a key role in mitochondrial protein import, folding, and assembly. Plays an essential role in the protein quality control system, the correct folding of proteins, the re-folding of misfolded proteins, and the targeting of proteins for subsequent degradation. These processes are achieved through cycles of ATP binding, ATP hydrolysis, and ADP release, mediated by co-chaperones. In mitochondria, it associates with the TIM (translocase of the inner membrane) protein complex to assist in the import and folding of mitochondrial proteins. Plays an important role in mitochondrial iron-sulfur cluster (ISC) biogenesis, interacts with and stabilizes ISC cluster assembly proteins FXN, NFU1, NFS1 and ISCU. Regulates erythropoiesis via stabilization of ISC assembly. Regulates mitochondrial calcium-dependent apoptosis by coupling two calcium channels, ITPR1 and VDAC1, at the mitochondria-associated endoplasmic reticulum (ER) membrane to facilitate calcium transport from the ER lumen to the mitochondria intermembrane space, providing calcium for the downstream calcium channel MCU, which releases it into the mitochondrial matrix. Although primarily located in the mitochondria, it is also found in other cellular compartments. In the cytosol, it associates with proteins involved in signaling, apoptosis, or senescence. It may play a role in cell cycle regulation via its interaction with and promotion of degradation of TP53. May play a role in the control of cell proliferation and cellular aging. Protects against reactive oxygen species (ROS). Extracellular HSPA9 plays a cytoprotective role by preventing cell lysis following immune attack by the membrane attack complex by disrupting formation of the complex. The polypeptide is Stress-70 protein, mitochondrial (Bos taurus (Bovine)).